The chain runs to 53 residues: Alpha-1-antiproteinase 1 (53 aa).

Positions 1–28 (EDLQGDAVPETSATKDDNEXPEMIPMSL) are disordered.

The protein belongs to the serpin family. In terms of processing, N-glycosylated; contains biantennary glycans. Plasma.

The protein localises to the secreted. In Equus caballus (Horse), this protein is Alpha-1-antiproteinase 1.